Reading from the N-terminus, the 649-residue chain is Acetyl-coenzyme A synthetase (649 aa).

CoA is bound by residues 190 to 193 (RGGR) and Thr-310. Residues 386–388 (GEP), 410–415 (DTWWQT), Asp-499, and Arg-514 contribute to the ATP site. Ser-522 is a binding site for CoA. Residue Arg-525 coordinates ATP. 3 residues coordinate Mg(2+): Val-536, His-538, and Val-541. Arg-583 contributes to the CoA binding site. Lys-608 bears the N6-acetyllysine mark.

Belongs to the ATP-dependent AMP-binding enzyme family. Requires Mg(2+) as cofactor. In terms of processing, acetylated. Deacetylation by the SIR2-homolog deacetylase activates the enzyme.

It carries out the reaction acetate + ATP + CoA = acetyl-CoA + AMP + diphosphate. Functionally, catalyzes the conversion of acetate into acetyl-CoA (AcCoA), an essential intermediate at the junction of anabolic and catabolic pathways. AcsA undergoes a two-step reaction. In the first half reaction, AcsA combines acetate with ATP to form acetyl-adenylate (AcAMP) intermediate. In the second half reaction, it can then transfer the acetyl group from AcAMP to the sulfhydryl group of CoA, forming the product AcCoA. The sequence is that of Acetyl-coenzyme A synthetase from Methylorubrum extorquens (strain PA1) (Methylobacterium extorquens).